The primary structure comprises 872 residues: Alanine--tRNA ligase (872 aa).

Positions 571, 575, 674, and 678 each coordinate Zn(2+).

The protein belongs to the class-II aminoacyl-tRNA synthetase family. Zn(2+) serves as cofactor.

Its subcellular location is the cytoplasm. It carries out the reaction tRNA(Ala) + L-alanine + ATP = L-alanyl-tRNA(Ala) + AMP + diphosphate. Catalyzes the attachment of alanine to tRNA(Ala) in a two-step reaction: alanine is first activated by ATP to form Ala-AMP and then transferred to the acceptor end of tRNA(Ala). Also edits incorrectly charged Ser-tRNA(Ala) and Gly-tRNA(Ala) via its editing domain. This chain is Alanine--tRNA ligase, found in Symbiobacterium thermophilum (strain DSM 24528 / JCM 14929 / IAM 14863 / T).